Consider the following 235-residue polypeptide: Calcium-activated potassium channel subunit beta-2 (235 aa).

The interval 1–45 (MFIWTSGRTSSSYRHDEKRNIYQKIRDHDLLDKRKTVTALKAGED) is ball and chain. At 1 to 46 (MFIWTSGRTSSSYRHDEKRNIYQKIRDHDLLDKRKTVTALKAGEDR) the chain is on the cytoplasmic side. The chain crosses the membrane as a helical span at residues 47–67 (AILLGLAMMVCSIMMYFLLGI). Topologically, residues 68–194 (TLLRSYMQSV…VILTKLYSSN (127 aa)) are extracellular. Asn88, Asn96, and Asn119 each carry an N-linked (GlcNAc...) asparagine glycan. Residues 195–215 (VLFHSLFWPTCMMAGGVAIVA) traverse the membrane as a helical segment. Residues 216–235 (MVKLTQYLSLLCERIQRINR) are Cytoplasmic-facing.

The protein belongs to the KCNMB (TC 8.A.14.1) family. KCNMB2 subfamily. In terms of assembly, interacts with KCNMA1 tetramer. There are probably 4 molecules of KCMNB2 per KCNMA1 tetramer. In terms of processing, N-glycosylated. In terms of tissue distribution, highly expressed in brain and heart. Also expressed in lung.

It is found in the membrane. Regulatory subunit of the calcium activated potassium KCNMA1 (maxiK) channel. Modulates the calcium sensitivity and gating kinetics of KCNMA1, thereby contributing to KCNMA1 channel diversity. Acts as a negative regulator that confers rapid and complete inactivation of KCNMA1 channel complex. This chain is Calcium-activated potassium channel subunit beta-2 (Kcnmb2), found in Rattus norvegicus (Rat).